Here is a 328-residue protein sequence, read N- to C-terminus: MSAAGLLAPAPAQAGAPPAPEYYPEEDEELESAEEDERSCRGRESDEDTEDASETDLAKHDEEDYVEMKEQMYQDKLASLKRQLQQLQEGTLQEYQKRMKKLDQQYKERIRNAELFLQLETEQVERNYIKEKKAAVKEFEDKKVELKENLIAELEEKKKMIENEKLTMELTGDSMEVKPIMTRKLRRRPNDPVPIPDKRRKPAPAQLNYLLTDEQIMEDLRTLNKLKSPKRPASPSSPEHLPATPAESPAQRFEARIEDGKLYYDKRWYHKSQAIYLESKDNQKLSCVISSVGANEIWVRKTSDSTKMRIYLGQLQRGLFVIRRRSAA.

The segment covering 1–16 has biased composition (low complexity); that stretch reads MSAAGLLAPAPAQAGA. The disordered stretch occupies residues 1 to 65; sequence MSAAGLLAPA…DLAKHDEEDY (65 aa). At Ser2 the chain carries N-acetylserine. A mediates interaction with USP17L2 region spans residues 2–170; that stretch reads SAAGLLAPAP…IENEKLTMEL (169 aa). 2 stretches are compositionally biased toward acidic residues: residues 23–37 and 45–54; these read YPEE…EEDE and SDEDTEDASE. A phosphoserine mark is found at Ser32 and Ser45. The residue at position 49 (Thr49) is a Phosphothreonine. The residue at position 53 (Ser53) is a Phosphoserine. The segment covering 56-65 has biased composition (basic and acidic residues); that stretch reads DLAKHDEEDY. The stretch at 66 to 171 forms a coiled coil; that stretch reads VEMKEQMYQD…ENEKLTMELT (106 aa). Residues Lys69, Lys178, and Lys201 each participate in a glycyl lysine isopeptide (Lys-Gly) (interchain with G-Cter in SUMO2) cross-link. Residues 188–226 are sin3 interaction domain (SID); the sequence is RPNDPVPIPDKRRKPAPAQLNYLLTDEQIMEDLRTLNKL. Positions 226-252 are disordered; it reads LKSPKRPASPSSPEHLPATPAESPAQR. Residues Ser228, Ser234, and Ser237 each carry the phosphoserine modification. Thr244 bears the Phosphothreonine mark.

The protein belongs to the SDS3 family. Interacts with HCFC1. Homodimer. Component of the SIN3 histone deacetylase (HDAC) corepressor complex. Interacts with SIN3A. Interaction with SIN3B enhances the interaction between SIN3B and HDAC1 to form a complex. Component of a mSin3A corepressor complex that contains SIN3A, SAP130, SUDS3/SAP45, ARID4B/SAP180, HDAC1 and HDAC2. Interacts with USP17L2; the interaction is direct. Interacts with FOXK2. Post-translationally, polyubiquitinated. 'Lys-63'-polyubiquitinated SUDS3 positively regulates histone deacetylation. Regulated through deubiquitination by USP17L2/USP17 that cleaves 'Lys-63'-linked ubiquitin chains.

Its subcellular location is the nucleus. In terms of biological role, regulatory protein which represses transcription and augments histone deacetylase activity of HDAC1. May have a potential role in tumor suppressor pathways through regulation of apoptosis. May function in the assembly and/or enzymatic activity of the mSin3A corepressor complex or in mediating interactions between the complex and other regulatory complexes. This chain is Sin3 histone deacetylase corepressor complex component SDS3 (SUDS3), found in Pongo abelii (Sumatran orangutan).